The chain runs to 167 residues: Endoribonuclease YbeY (167 aa).

3 residues coordinate Zn(2+): H132, H136, and H142.

It belongs to the endoribonuclease YbeY family. Requires Zn(2+) as cofactor.

Its subcellular location is the cytoplasm. Its function is as follows. Single strand-specific metallo-endoribonuclease involved in late-stage 70S ribosome quality control and in maturation of the 3' terminus of the 16S rRNA. The chain is Endoribonuclease YbeY from Clostridium tetani (strain Massachusetts / E88).